Consider the following 139-residue polypeptide: Probable trafficking protein particle complex subunit 2 (139 aa).

It belongs to the TRAPP small subunits family. Sedlin subfamily. In terms of assembly, part of the multisubunit TRAPP (transport protein particle) complex.

Its subcellular location is the cytoplasm. It is found in the perinuclear region. The protein resides in the endoplasmic reticulum. It localises to the golgi apparatus. Its function is as follows. May play a role in vesicular transport from endoplasmic reticulum to Golgi. Involved in dsRNA uptake. This chain is Probable trafficking protein particle complex subunit 2, found in Drosophila melanogaster (Fruit fly).